The sequence spans 188 residues: Putative manganese efflux pump MntP (188 aa).

Helical transmembrane passes span 8-28 (CLGL…GFVI), 39-59 (IALF…LTGL), 68-88 (IDHW…IYEA), 106-126 (LLAL…GLSL), 131-151 (ILLP…IGVF), and 164-184 (IEII…IEDL).

Belongs to the MntP (TC 9.B.29) family.

Its subcellular location is the cell inner membrane. Functionally, probably functions as a manganese efflux pump. The chain is Putative manganese efflux pump MntP from Crocosphaera subtropica (strain ATCC 51142 / BH68) (Cyanothece sp. (strain ATCC 51142)).